A 62-amino-acid chain; its full sequence is Conotoxin Im5.1 (62 aa).

The signal sequence occupies residues M1 to S19. The propeptide occupies T20 to N48. W60 carries the tryptophan amide modification.

This sequence belongs to the conotoxin T superfamily. Post-translationally, contains 2 disulfide bonds that can be either 'C1-C3, C2-C4' or 'C1-C4, C2-C3', since these disulfide connectivities have been observed for conotoxins with cysteine framework V (for examples, see AC P0DQQ7 and AC P81755). Expressed by the venom duct.

Its subcellular location is the secreted. This Conus imperialis (Imperial cone) protein is Conotoxin Im5.1.